Reading from the N-terminus, the 347-residue chain is Quinolinate synthase (347 aa).

Positions 47 and 68 each coordinate iminosuccinate. [4Fe-4S] cluster is bound at residue cysteine 113. Iminosuccinate contacts are provided by residues 139 to 141 (YAN) and serine 156. Cysteine 200 lines the [4Fe-4S] cluster pocket. Iminosuccinate-binding positions include 226 to 228 (HPE) and threonine 243. Cysteine 297 lines the [4Fe-4S] cluster pocket.

This sequence belongs to the quinolinate synthase family. Type 1 subfamily. The cofactor is [4Fe-4S] cluster.

It is found in the cytoplasm. The enzyme catalyses iminosuccinate + dihydroxyacetone phosphate = quinolinate + phosphate + 2 H2O + H(+). Its pathway is cofactor biosynthesis; NAD(+) biosynthesis; quinolinate from iminoaspartate: step 1/1. Catalyzes the condensation of iminoaspartate with dihydroxyacetone phosphate to form quinolinate. This Salmonella typhi protein is Quinolinate synthase.